Consider the following 245-residue polypeptide: tRNA (guanine-N(1)-)-methyltransferase (245 aa).

S-adenosyl-L-methionine-binding positions include G114 and 134–139; that span reads IGDYIL.

Belongs to the RNA methyltransferase TrmD family. Homodimer.

It is found in the cytoplasm. The enzyme catalyses guanosine(37) in tRNA + S-adenosyl-L-methionine = N(1)-methylguanosine(37) in tRNA + S-adenosyl-L-homocysteine + H(+). In terms of biological role, specifically methylates guanosine-37 in various tRNAs. This chain is tRNA (guanine-N(1)-)-methyltransferase, found in Listeria monocytogenes serotype 4b (strain CLIP80459).